The following is a 117-amino-acid chain: Large ribosomal subunit protein bL19 (117 aa).

This sequence belongs to the bacterial ribosomal protein bL19 family.

Functionally, this protein is located at the 30S-50S ribosomal subunit interface and may play a role in the structure and function of the aminoacyl-tRNA binding site. In Shewanella woodyi (strain ATCC 51908 / MS32), this protein is Large ribosomal subunit protein bL19.